The primary structure comprises 586 residues: Probable zinc metalloprotease EGY3, chloroplastic (586 aa).

A chloroplast-targeting transit peptide spans 1–54 (MSSSSLVTSLLFSSSSSSNTATSTSSRRSFSLFSKNQYCKPSPLRRSSSLLLVR). Residues 62–73 (EEKAAPAAESHH) show a composition bias toward basic and acidic residues. The disordered stretch occupies residues 62–118 (EEKAAPAAESHHAGGGQDDAATASHHAVEGENGVADADGGGVKKSKEELEEEEQQEV). The stretch at 103 to 195 (VKKSKEELEE…NTFKALDLNK (93 aa)) forms a coiled coil. The next 7 helical transmembrane spans lie at 287-307 (LSAV…SGFF), 318-338 (VSDV…SEIA), 389-409 (ASAY…DGSL), 427-447 (PLLS…GNVL), 454-474 (VGVP…VTSL), 506-526 (VALG…WGLF), and 550-570 (YAWG…NGGG).

It belongs to the peptidase M50B family.

It localises to the plastid. Its subcellular location is the chloroplast membrane. In terms of biological role, probable membrane-associated metalloprotease that may be involved in chloroplast development. This chain is Probable zinc metalloprotease EGY3, chloroplastic (EGY3), found in Oryza sativa subsp. indica (Rice).